The sequence spans 144 residues: Cytochrome c oxidase subunit 4 isoform 1, mitochondrial (144 aa).

The Mitochondrial matrix portion of the chain corresponds to 1–73 (SVVKSEDFTL…SFAEMNRRSN (73 aa)). Residue Lys4 is modified to N6-acetyllysine; alternate. The residue at position 4 (Lys4) is an N6-succinyllysine; alternate. The residue at position 28 (Lys28) is an N6-acetyllysine. Phosphoserine occurs at positions 31 and 33. Residue Lys35 is modified to N6-acetyllysine; alternate. Lys35 carries the post-translational modification N6-succinyllysine; alternate. An N6-acetyllysine modification is found at Lys42. A helical transmembrane segment spans residues 74 to 99 (EWKTVVGTAMFFFGITALIVMWEKRY). Topologically, residues 100-144 (VYGPLPQTFDKEWVAMQTKRMLDMKVNPIQGLASKWDYEKNEWKK) are mitochondrial intermembrane.

This sequence belongs to the cytochrome c oxidase IV family. As to quaternary structure, component of the cytochrome c oxidase (complex IV, CIV), a multisubunit enzyme composed of 14 subunits. The complex is composed of a catalytic core of 3 subunits MT-CO1, MT-CO2 and MT-CO3, encoded in the mitochondrial DNA, and 11 supernumerary subunits COX4I, COX5A, COX5B, COX6A, COX6B, COX6C, COX7A, COX7B, COX7C, COX8 and NDUFA4, which are encoded in the nuclear genome. The complex exists as a monomer or a dimer and forms supercomplexes (SCs) in the inner mitochondrial membrane with NADH-ubiquinone oxidoreductase (complex I, CI) and ubiquinol-cytochrome c oxidoreductase (cytochrome b-c1 complex, complex III, CIII), resulting in different assemblies (supercomplex SCI(1)III(2)IV(1) and megacomplex MCI(2)III(2)IV(2)). Interacts with PHB2; the interaction decreases in absence of SPHK2. Interacts with AFG1L. Interacts with ABCB7; this interaction allows the regulation of cellular iron homeostasis and cellular reactive oxygen species (ROS) levels in cardiomyocytes. Interacts with FLVCR2; this interaction occurs in the absence of heme and is disrupted upon heme binding. Interacts with IRGC.

It is found in the mitochondrion inner membrane. It functions in the pathway energy metabolism; oxidative phosphorylation. Component of the cytochrome c oxidase, the last enzyme in the mitochondrial electron transport chain which drives oxidative phosphorylation. The respiratory chain contains 3 multisubunit complexes succinate dehydrogenase (complex II, CII), ubiquinol-cytochrome c oxidoreductase (cytochrome b-c1 complex, complex III, CIII) and cytochrome c oxidase (complex IV, CIV), that cooperate to transfer electrons derived from NADH and succinate to molecular oxygen, creating an electrochemical gradient over the inner membrane that drives transmembrane transport and the ATP synthase. Cytochrome c oxidase is the component of the respiratory chain that catalyzes the reduction of oxygen to water. Electrons originating from reduced cytochrome c in the intermembrane space (IMS) are transferred via the dinuclear copper A center (CU(A)) of subunit 2 and heme A of subunit 1 to the active site in subunit 1, a binuclear center (BNC) formed by heme A3 and copper B (CU(B)). The BNC reduces molecular oxygen to 2 water molecules using 4 electrons from cytochrome c in the IMS and 4 protons from the mitochondrial matrix. The sequence is that of Cytochrome c oxidase subunit 4 isoform 1, mitochondrial (COX4I1) from Theropithecus gelada (Gelada baboon).